The primary structure comprises 300 residues: N-acetylmuramic acid 6-phosphate etherase 1 (300 aa).

The 164-residue stretch at 57-220 (IATAFAQGGR…TTGAMIKSGK (164 aa)) folds into the SIS domain. Residue Glu85 is the Proton donor of the active site. Glu116 is a catalytic residue.

The protein belongs to the GCKR-like family. MurNAc-6-P etherase subfamily. Homodimer.

It carries out the reaction N-acetyl-D-muramate 6-phosphate + H2O = N-acetyl-D-glucosamine 6-phosphate + (R)-lactate. Its pathway is amino-sugar metabolism; 1,6-anhydro-N-acetylmuramate degradation. The protein operates within amino-sugar metabolism; N-acetylmuramate degradation. It functions in the pathway cell wall biogenesis; peptidoglycan recycling. In terms of biological role, specifically catalyzes the cleavage of the D-lactyl ether substituent of MurNAc 6-phosphate, producing GlcNAc 6-phosphate and D-lactate. Together with AnmK, is also required for the utilization of anhydro-N-acetylmuramic acid (anhMurNAc) either imported from the medium or derived from its own cell wall murein, and thus plays a role in cell wall recycling. The polypeptide is N-acetylmuramic acid 6-phosphate etherase 1 (Vibrio cholerae serotype O1 (strain ATCC 39315 / El Tor Inaba N16961)).